Reading from the N-terminus, the 518-residue chain is Cytochrome P450 82E3 (518 aa).

Residues 2–22 (VFPVEAIVGLVTFTFLFYFLW) traverse the membrane as a helical segment. Lys254 participates in a covalent cross-link: Glycyl lysine isopeptide (Lys-Gly) (interchain with G-Cter in ubiquitin). Cys458 contributes to the heme binding site.

Belongs to the cytochrome P450 family. CYP82E2 subfamily. Requires heme as cofactor. In terms of tissue distribution, expressed at low levels in green leaves.

The protein localises to the membrane. The protein operates within alkaloid biosynthesis; nicotine biosynthesis. Its function is as follows. No nicotine N-demethylase activity. The chain is Cytochrome P450 82E3 from Nicotiana tabacum (Common tobacco).